The primary structure comprises 289 residues: Probable phosphoribulokinase (289 aa).

Position 12 to 20 (glycine 12 to threonine 20) interacts with ATP.

This sequence belongs to the phosphoribulokinase family.

It catalyses the reaction D-ribulose 5-phosphate + ATP = D-ribulose 1,5-bisphosphate + ADP + H(+). The chain is Probable phosphoribulokinase (prkB) from Escherichia coli (strain K12).